A 446-amino-acid chain; its full sequence is tRNA modification GTPase MnmE (446 aa).

(6S)-5-formyl-5,6,7,8-tetrahydrofolate contacts are provided by R24, E81, and K120. The TrmE-type G domain maps to 216–368; the sequence is GLHAVLIGPP…LHTRLRELAL (153 aa). N226 is a K(+) binding site. GTP contacts are provided by residues 226–231, 245–251, and 270–273; these read NAGKSS, TDVAGTT, and DTAG. S230 provides a ligand contact to Mg(2+). K(+) is bound by residues T245, V247, and T250. T251 is a Mg(2+) binding site. A (6S)-5-formyl-5,6,7,8-tetrahydrofolate-binding site is contributed by K446.

This sequence belongs to the TRAFAC class TrmE-Era-EngA-EngB-Septin-like GTPase superfamily. TrmE GTPase family. In terms of assembly, homodimer. Heterotetramer of two MnmE and two MnmG subunits. The cofactor is K(+).

It is found in the cytoplasm. In terms of biological role, exhibits a very high intrinsic GTPase hydrolysis rate. Involved in the addition of a carboxymethylaminomethyl (cmnm) group at the wobble position (U34) of certain tRNAs, forming tRNA-cmnm(5)s(2)U34. This chain is tRNA modification GTPase MnmE, found in Xanthomonas campestris pv. campestris (strain 8004).